Reading from the N-terminus, the 474-residue chain is Glutamate--tRNA ligase (474 aa).

The 'HIGH' region motif lies at 10–20 (PSPTGYLHIGG). Residues cysteine 107, cysteine 109, cysteine 134, and aspartate 136 each contribute to the Zn(2+) site. The 'KMSKS' region signature appears at 244 to 248 (RLSKR). ATP is bound at residue lysine 247.

Belongs to the class-I aminoacyl-tRNA synthetase family. Glutamate--tRNA ligase type 1 subfamily. Monomer. Zn(2+) is required as a cofactor.

The protein localises to the cytoplasm. The catalysed reaction is tRNA(Glu) + L-glutamate + ATP = L-glutamyl-tRNA(Glu) + AMP + diphosphate. Its function is as follows. Catalyzes the attachment of glutamate to tRNA(Glu) in a two-step reaction: glutamate is first activated by ATP to form Glu-AMP and then transferred to the acceptor end of tRNA(Glu). This chain is Glutamate--tRNA ligase, found in Anaeromyxobacter dehalogenans (strain 2CP-C).